Reading from the N-terminus, the 704-residue chain is DNA ligase (704 aa).

Residues 43 to 47 (DADYD), 92 to 93 (SL), and Glu-124 contribute to the NAD(+) site. Lys-126 (N6-AMP-lysine intermediate) is an active-site residue. NAD(+) contacts are provided by Arg-147, Glu-182, Lys-298, and Lys-322. Positions 427, 430, 445, and 451 each coordinate Zn(2+). A BRCT domain is found at 625–704 (PVASPVAGKI…DGWLRLIGDA (80 aa)).

The protein belongs to the NAD-dependent DNA ligase family. LigA subfamily. It depends on Mg(2+) as a cofactor. Mn(2+) is required as a cofactor.

It catalyses the reaction NAD(+) + (deoxyribonucleotide)n-3'-hydroxyl + 5'-phospho-(deoxyribonucleotide)m = (deoxyribonucleotide)n+m + AMP + beta-nicotinamide D-nucleotide.. DNA ligase that catalyzes the formation of phosphodiester linkages between 5'-phosphoryl and 3'-hydroxyl groups in double-stranded DNA using NAD as a coenzyme and as the energy source for the reaction. It is essential for DNA replication and repair of damaged DNA. The sequence is that of DNA ligase from Cereibacter sphaeroides (strain ATCC 17029 / ATH 2.4.9) (Rhodobacter sphaeroides).